Reading from the N-terminus, the 387-residue chain is Methylthioribose-1-phosphate isomerase (387 aa).

D257 serves as the catalytic Proton donor.

This sequence belongs to the eIF-2B alpha/beta/delta subunits family. MtnA subfamily.

The protein localises to the cytoplasm. Its subcellular location is the nucleus. It carries out the reaction 5-(methylsulfanyl)-alpha-D-ribose 1-phosphate = 5-(methylsulfanyl)-D-ribulose 1-phosphate. It functions in the pathway amino-acid biosynthesis; L-methionine biosynthesis via salvage pathway; L-methionine from S-methyl-5-thio-alpha-D-ribose 1-phosphate: step 1/6. Functionally, catalyzes the interconversion of methylthioribose-1-phosphate (MTR-1-P) into methylthioribulose-1-phosphate (MTRu-1-P). This is Methylthioribose-1-phosphate isomerase (mri1) from Neosartorya fischeri (strain ATCC 1020 / DSM 3700 / CBS 544.65 / FGSC A1164 / JCM 1740 / NRRL 181 / WB 181) (Aspergillus fischerianus).